A 93-amino-acid polypeptide reads, in one-letter code: Alpha-elapitoxin-Oh3a (93 aa).

Residues 1–21 (MKTLLLTLVVVTIVCLDLGYT) form the signal peptide. 5 disulfide bridges follow: cysteine 24–cysteine 42, cysteine 35–cysteine 63, cysteine 48–cysteine 52, cysteine 67–cysteine 78, and cysteine 79–cysteine 84.

Belongs to the three-finger toxin family. Long-chain subfamily. Type II alpha-neurotoxin sub-subfamily. In terms of tissue distribution, expressed by the venom gland.

The protein localises to the secreted. In terms of biological role, binds to muscular and neuronal nicotinic acetylcholine receptor (nAChR) and inhibits acetylcholine from binding to the receptor, thereby impairing neuromuscular and neuronal transmission. Pseudo-irreversibly inhibits twitches in chick biventer cervicis nerve-muscle preparations in a concentration-dependent manner. This chain is Alpha-elapitoxin-Oh3a, found in Ophiophagus hannah (King cobra).